A 172-amino-acid polypeptide reads, in one-letter code: Ribosome maturation factor RimM (172 aa).

In terms of domain architecture, PRC barrel spans 96–168 (EGEFYYHEII…RVDVEIPEGL (73 aa)).

It belongs to the RimM family. In terms of assembly, binds ribosomal protein uS19.

It is found in the cytoplasm. Functionally, an accessory protein needed during the final step in the assembly of 30S ribosomal subunit, possibly for assembly of the head region. Essential for efficient processing of 16S rRNA. May be needed both before and after RbfA during the maturation of 16S rRNA. It has affinity for free ribosomal 30S subunits but not for 70S ribosomes. This Streptococcus gordonii (strain Challis / ATCC 35105 / BCRC 15272 / CH1 / DL1 / V288) protein is Ribosome maturation factor RimM.